We begin with the raw amino-acid sequence, 124 residues long: Secretion system apparatus protein SsaP (124 aa).

This chain is Secretion system apparatus protein SsaP (ssaP), found in Salmonella typhi.